The primary structure comprises 541 residues: Major facilitator-type transporter ecdD (541 aa).

The chain crosses the membrane as a helical span at residues 15 to 35 (AWPAILISGFVAFGGILFGYD). N64 is a glycosylation site (N-linked (GlcNAc...) asparagine). Helical transmembrane passes span 72–92 (AIVS…SPMG), 106–126 (GIFV…PFLA), 129–149 (FFAG…QSET), and 156–176 (GFIV…ASVL). N178 and N184 each carry an N-linked (GlcNAc...) asparagine glycan. Residues 191–211 (IPIAVQFAWSIILVGGMLILP) form a helical membrane-spanning segment. N-linked (GlcNAc...) asparagine glycosylation is present at N253. A run of 6 helical transmembrane segments spans residues 277-297 (LVTG…FIMY), 313-333 (VITL…LYAI), 340-360 (PVLL…AVLG), 384-404 (IAFI…SAWV), 418-440 (SLSM…TPYL), and 454-474 (IFFI…FMIY).

It belongs to the major facilitator superfamily. Sugar transporter (TC 2.A.1.1) family.

The protein resides in the membrane. The chain is Major facilitator-type transporter ecdD from Aspergillus rugulosus (Emericella rugulosa).